The sequence spans 462 residues: Cysteine--tRNA ligase (462 aa).

Cysteine 28 lines the Zn(2+) pocket. A 'HIGH' region motif is present at residues 30-40 (MTVYDYCHIGH). Zn(2+)-binding residues include cysteine 209, histidine 234, and glutamate 238. A 'KMSKS' region motif is present at residues 266–270 (KMSKS). Lysine 269 contributes to the ATP binding site.

It belongs to the class-I aminoacyl-tRNA synthetase family. As to quaternary structure, monomer. Zn(2+) serves as cofactor.

The protein localises to the cytoplasm. It carries out the reaction tRNA(Cys) + L-cysteine + ATP = L-cysteinyl-tRNA(Cys) + AMP + diphosphate. The chain is Cysteine--tRNA ligase from Pseudomonas fluorescens (strain SBW25).